We begin with the raw amino-acid sequence, 280 residues long: Ribosomal RNA-processing protein 7 homolog A (280 aa).

Basic residues predominate over residues 1–10 (MVSRRKKRKA). The segment at 1 to 24 (MVSRRKKRKAGGHEESIPSPPGYS) is disordered. Residues 59–159 (RTLFILNVPP…SGIHKWISDY (101 aa)) enclose the RRM domain. A Phosphoserine modification is found at Ser-99.

It belongs to the RRP7 family. As to quaternary structure, part of the small subunit (SSU) processome, composed of more than 70 proteins and the RNA chaperone small nucleolar RNA (snoRNA) U3. Interacts with NOL6; required for NOL6 localization to nucleolus.

The protein localises to the nucleus. Its subcellular location is the nucleolus. The protein resides in the cell projection. It localises to the cilium. It is found in the cytoplasm. The protein localises to the cytoskeleton. Its subcellular location is the microtubule organizing center. The protein resides in the centrosome. In terms of biological role, nucleolar protein that is involved in ribosomal RNA (rRNA) processing. Also plays a role in primary cilia resorption, and cell cycle progression in neurogenesis and neocortex development. Part of the small subunit (SSU) processome, first precursor of the small eukaryotic ribosomal subunit. During the assembly of the SSU processome in the nucleolus, many ribosome biogenesis factors, an RNA chaperone and ribosomal proteins associate with the nascent pre-rRNA and work in concert to generate RNA folding, modifications, rearrangements and cleavage as well as targeted degradation of pre-ribosomal RNA by the RNA exosome. This is Ribosomal RNA-processing protein 7 homolog A (Rrp7a) from Mus musculus (Mouse).